The sequence spans 292 residues: 33 kDa chaperonin (292 aa).

2 disulfides stabilise this stretch: Cys230–Cys232 and Cys263–Cys266.

The protein belongs to the HSP33 family. In terms of processing, under oxidizing conditions two disulfide bonds are formed involving the reactive cysteines. Under reducing conditions zinc is bound to the reactive cysteines and the protein is inactive.

Its subcellular location is the cytoplasm. Its function is as follows. Redox regulated molecular chaperone. Protects both thermally unfolding and oxidatively damaged proteins from irreversible aggregation. Plays an important role in the bacterial defense system toward oxidative stress. The polypeptide is 33 kDa chaperonin (Cronobacter sakazakii (strain ATCC BAA-894) (Enterobacter sakazakii)).